The sequence spans 1216 residues: DNA-directed RNA polymerase subunit beta (1216 aa).

The interval 1185–1216 (EEKQELPSQEYESLNLDQELKTASENVSESEF) is disordered. Positions 1190 to 1216 (LPSQEYESLNLDQELKTASENVSESEF) are enriched in polar residues.

Belongs to the RNA polymerase beta chain family. In terms of assembly, the RNAP catalytic core consists of 2 alpha, 1 beta, 1 beta' and 1 omega subunit. When a sigma factor is associated with the core the holoenzyme is formed, which can initiate transcription.

It carries out the reaction RNA(n) + a ribonucleoside 5'-triphosphate = RNA(n+1) + diphosphate. DNA-dependent RNA polymerase catalyzes the transcription of DNA into RNA using the four ribonucleoside triphosphates as substrates. This Mycoplasmopsis pulmonis (strain UAB CTIP) (Mycoplasma pulmonis) protein is DNA-directed RNA polymerase subunit beta.